The primary structure comprises 138 residues: Basic phospholipase A2 vurtoxin (138 aa).

An N-terminal signal peptide occupies residues 1 to 16; the sequence is MRTLWIVAVCLIGVEG. 7 disulfides stabilise this stretch: Cys-42/Cys-131, Cys-44/Cys-60, Cys-59/Cys-111, Cys-65/Cys-138, Cys-66/Cys-104, Cys-73/Cys-97, and Cys-91/Cys-102. The Ca(2+) site is built by Tyr-43, Gly-45, and Gly-47. His-63 is a catalytic residue. A Ca(2+)-binding site is contributed by Asp-64. Residue Asp-105 is part of the active site.

Ca(2+) serves as cofactor. As to expression, expressed by the venom gland.

The protein localises to the secreted. It catalyses the reaction a 1,2-diacyl-sn-glycero-3-phosphocholine + H2O = a 1-acyl-sn-glycero-3-phosphocholine + a fatty acid + H(+). Snake venom phospholipase A2 that may have a strong anticoagulant activity. Is able to suppress the acetylcholine (ACh)-evoked current mediated by alpha-7 (CHRNA7)-similar nAChRs in L.stagnalis neurons (IC(50)=10.5 uM) and to compete with alpha-bungarotoxin for binding to muscle- and alpha-7 neuronal nAChR types, as well as to AChBPs. In inhibition of alpha-bungarotoxin binding, this toxin is mostly active against T.californica nAChR (IC(50)=0.26 uM), it is moderately active against human alpha-7 nAChR (IC(50)=14 uM), and is not active against L.stagnalis and A.californica AChBP (IC(50)&gt;30 uM). In Vipera renardi (Steppe viper), this protein is Basic phospholipase A2 vurtoxin.